The primary structure comprises 391 residues: MDQFIKQDETGDLIETGMNVANHFLSTPIQGTNSLSKASILPGVAPVLIGNPEQKNIQHPTASHQGSKTKGRGSGVRSIIVSPSEAGNGGTQIPEPLFAQTGQGGIVTTVYQDPTIQPTGSYRSVELAKIGKERMINRFVEKPRTSTPVTEFKRGGPGAAAQGQTIQEEGIDGNGASAGSKERSGSLSGATLYAHLSLPQQDSTPANVGIAPQSAISANEIMDLLRGMDARLQHLEQKVDKVLAQGSMVTQIKNELSTVKTTLATIEGMMATVKIMDPGNPTGVPVDELRRSFSDHVTIVSGPGDVSFSSSEKPTLYLDELARPVSKPRPAKQTKSQPVKDLAGQKVMITKMITDCVANPQMKQAFEQRLAKASTEDALNDIKRDIIRSAI.

The tract at residues 1 to 194 is N-terminus domain; it reads MDQFIKQDET…GSLSGATLYA (194 aa). Phosphothreonine is present on residues T10, T16, T91, T150, and T165. S188 is subject to Phosphoserine. The multimerization stretch occupies residues 216–279; it reads ISANEIMDLL…MATVKIMDPG (64 aa). Residues 218–245 adopt a coiled-coil conformation; the sequence is ANEIMDLLRGMDARLQHLEQKVDKVLAQ. Phosphothreonine is present on T250. S257 carries the post-translational modification Phosphoserine. Phosphothreonine is present on residues T258 and T282. Phosphoserine occurs at positions 292 and 294. Position 298 is a phosphothreonine (T298). Residues S301 and S374 each carry the phosphoserine modification. The interaction with the nucleoprotein stretch occupies residues 343–391; the sequence is AGQKVMITKMITDCVANPQMKQAFEQRLAKASTEDALNDIKRDIIRSAI. T375 carries the phosphothreonine modification.

Belongs to the rubulavirus/avulavirus P protein family. As to quaternary structure, homotetramer. Interacts (via multimerization domain) with polymerase L; this interaction forms the polymerase L-P complex. Interacts (via N-terminus) with N0 (via Ncore); this interaction allows P to chaperon N0 to avoid N polymerization before encapsidation. Interacts (via C-terminus) with N-RNA template; this interaction positions the polymerase on the template for both transcription and replication. Interacts with host RPS6KB1 kinase; this interaction may play a role in the viral replication and transcription.

It is found in the virion. Its function is as follows. Essential cofactor of the RNA polymerase L that plays a central role in the transcription and replication by forming the polymerase complex with RNA polymerase L and recruiting L to the genomic N-RNA template for RNA synthesis. Also plays a central role in the encapsidation of nascent RNA chains by forming the encapsidation complex with the nucleocapsid protein N (N-P complex). Acts as a chaperone for newly synthesized free N protein, so-called N0, allowing encapsidation of nascent RNA chains during replication. The nucleoprotein protein N prevents excessive phosphorylation of P, which leads to down-regulation of viral transcription/ replication. Participates, together with N, in the formation of viral factories (viroplasms), which are large inclusions in the host cytoplasm where replication takes place. This Homo sapiens (Human) protein is Phosphoprotein.